The following is a 396-amino-acid chain: MAVSMACARPLISVYSEKGESSGKNVTMPAVFRAPIRPDIVNFVHTNLRKNNRQPYAVSKLAGHQTSAESWGTGRAVARIPRVRGGGTHRSGQGAFGNMCRGGRMFAPTKTWRRWHRRVNTTQKRYAVCSALAASALPALIMSKGHRIEEIPEVPLVVEDKVESYKKTKEAVLLLKKLKAWNDIKKVYASQRMRAGKGKMRNRRRIQRRGPCVIYNENNGLVKAFRNIPGITLLNVSKLNLLRLAPGGHVGRFCIWTESAFRKLDDLYGTWRKSAKLKADYNLPMHKMTNTDLTRILKSQEIQRALRAPNKKVKRRELKKNPLKNLRIMMRLNPYAKTARRHAILQQLENIKAKEKKPDDGKPKAKKPLDAKTKMIKLAKAKKRQAREAAKAAETK.

Residues 352-373 (KAKEKKPDDGKPKAKKPLDAKT) show a composition bias toward basic and acidic residues. Residues 352–374 (KAKEKKPDDGKPKAKKPLDAKTK) form a disordered region.

The protein belongs to the universal ribosomal protein uL4 family. As to quaternary structure, component of the large ribosomal subunit.

The protein localises to the cytoplasm. In terms of biological role, component of the large ribosomal subunit. The ribosome is a large ribonucleoprotein complex responsible for the synthesis of proteins in the cell. This is Large ribosomal subunit protein uL4A (rpl4-a) from Xenopus laevis (African clawed frog).